A 347-amino-acid polypeptide reads, in one-letter code: Fructose-1,6-bisphosphatase class 1 (347 aa).

The Mg(2+) site is built by Glu107, Asp128, Leu130, and Asp131. Substrate contacts are provided by residues 131 to 134 (DGSS), Asn224, Tyr257, and Lys286. Glu292 is a binding site for Mg(2+).

Belongs to the FBPase class 1 family. In terms of assembly, homotetramer. The cofactor is Mg(2+).

The protein resides in the cytoplasm. The catalysed reaction is beta-D-fructose 1,6-bisphosphate + H2O = beta-D-fructose 6-phosphate + phosphate. The protein operates within carbohydrate biosynthesis; gluconeogenesis. This Sorangium cellulosum (strain So ce56) (Polyangium cellulosum (strain So ce56)) protein is Fructose-1,6-bisphosphatase class 1.